A 313-amino-acid chain; its full sequence is Serine/threonine-protein phosphatase CPPED1 (313 aa).

Serine 2 is subject to Phosphoserine. The tract at residues 47 to 250 (KAWATGDCDN…AVFSGHYHRN (204 aa)) is catalytic. The a divalent metal cation site is built by aspartate 53, aspartate 90, asparagine 127, and histidine 246. At serine 293 the chain carries Phosphoserine.

Belongs to the metallophosphoesterase superfamily. CPPED1 family. A divalent metal cation is required as a cofactor.

It localises to the cytoplasm. It carries out the reaction O-phospho-L-seryl-[protein] + H2O = L-seryl-[protein] + phosphate. The enzyme catalyses O-phospho-L-threonyl-[protein] + H2O = L-threonyl-[protein] + phosphate. Its function is as follows. Protein phosphatase that dephosphorylates AKT family kinase specifically at 'Ser-473', blocking cell cycle progression and promoting cell apoptosis. May play an inhibitory role in glucose uptake by adipocytes. The sequence is that of Serine/threonine-protein phosphatase CPPED1 (CPPED1) from Bos taurus (Bovine).